Here is a 454-residue protein sequence, read N- to C-terminus: tRNA modification GTPase MnmE (454 aa).

Residues arginine 23, glutamate 80, and lysine 120 each contribute to the (6S)-5-formyl-5,6,7,8-tetrahydrofolate site. In terms of domain architecture, TrmE-type G spans 216–377 (GMKVVIAGRP…LRDHLKQSMG (162 aa)). A K(+)-binding site is contributed by asparagine 226. GTP is bound by residues 226–231 (NAGKSS), 245–251 (TDIAGTT), 270–273 (DTAG), 335–338 (NKAD), and 358–360 (SAR). Serine 230 contacts Mg(2+). The K(+) site is built by threonine 245, isoleucine 247, and threonine 250. Mg(2+) is bound at residue threonine 251. Lysine 454 is a (6S)-5-formyl-5,6,7,8-tetrahydrofolate binding site.

It belongs to the TRAFAC class TrmE-Era-EngA-EngB-Septin-like GTPase superfamily. TrmE GTPase family. Homodimer. Heterotetramer of two MnmE and two MnmG subunits. Requires K(+) as cofactor.

The protein resides in the cytoplasm. In terms of biological role, exhibits a very high intrinsic GTPase hydrolysis rate. Involved in the addition of a carboxymethylaminomethyl (cmnm) group at the wobble position (U34) of certain tRNAs, forming tRNA-cmnm(5)s(2)U34. This Yersinia pestis protein is tRNA modification GTPase MnmE.